Consider the following 339-residue polypeptide: MALIKEPLKPTGALDEFRSFDVTPIIGTEFPDASLKAWLEDPKADDLLRELAITVSRRGVVFFRRQDGLTEEMQKAIVQKLGVLSGKPATSSLHRHAHQPDPNADPEILWINSEENKKLLAGTPFDPALPARQSCRGLWHNDISYEPNPSDYALLRITQPPALVVADLPAIDTLWASGYEVFDRISRPIQKFLETLTATFGELRERDGSDPKFQVPRGSPANVGTNLRPTHPVIRTNPVTGWKSVYAVGLHVQTINGLASDESDGLKKWFTKLIVENHDLQVRFRWNNANDVAIWDNRCTYHTATYDHEGYGIREGYRACGVGEKPYLDPNSTGRREAR.

Substrate is bound at residue H96. Residues H140 and D142 each contribute to the Fe cation site. Position 173 (T173) interacts with 2-oxoglutarate. Residues 207–230 (DGSDPKFQVPRGSPANVGTNLRPT) are disordered. H302 is a binding site for Fe cation. 2-oxoglutarate-binding residues include R314 and R318. R318 provides a ligand contact to substrate.

Belongs to the TfdA dioxygenase family. Fe(2+) serves as cofactor.

It functions in the pathway secondary metabolite biosynthesis; terpenoid biosynthesis. In terms of biological role, alpha-ketoglutarate-dependent dioxygenase; part of the gene cluster that mediates the biosynthesis of betaestacins. The bifunctional terpene synthase btcA converts isopentenyl diphosphate (IPP) and dimethylallyl diphosphate (DMAPP) into the sesterterpene betaestacin I. The C-terminal prenyltransferase (PT) domain of btcA catalyzes formation of GFPP, whereas the N-terminal terpene cyclase (TC) domain catalyzes the cyclization of GFPP into betaestacin I. The cytochrome P450 monooxygenase btcB is then responsible for the six-step oxidation of betaestacin I to yield betaestacin II. The roles of the cytochrome P450 monooxygenase btcC and the alpha-ketoglutarate-dependent dioxygenase btcD have not been identified yet. This chain is Alpha-ketoglutarate-dependent dioxygenase btcD, found in Neocamarosporium betae (Beet black rot fungus).